Reading from the N-terminus, the 746-residue chain is Quiannulatene synthase (746 aa).

The sesterterpenoid synthase stretch occupies residues 1-336; that stretch reads MASEVIVISD…SRYPTKTELN (336 aa). Asp95 serves as a coordination point for Mg(2+). The geranylfarnesyl diphosphate synthase stretch occupies residues 338 to 746; that stretch reads PEVIIVDGEL…VELMLRRLWV (409 aa). Isopentenyl diphosphate is bound by residues Lys465, Arg468, and His497. Positions 504 and 508 each coordinate Mg(2+). Arg513 is a dimethylallyl diphosphate binding site. Arg514 contacts isopentenyl diphosphate. Dimethylallyl diphosphate contacts are provided by Lys591, Thr592, Gln628, Asn635, and Lys645.

In the N-terminal section; belongs to the terpene synthase family. This sequence in the C-terminal section; belongs to the FPP/GGPP synthase family. It depends on Mg(2+) as a cofactor.

It catalyses the reaction isopentenyl diphosphate + (2E,6E)-farnesyl diphosphate = (2E,6E,10E)-geranylgeranyl diphosphate + diphosphate. The enzyme catalyses (2E,6E,10E,14E)-geranylfarnesyl diphosphate = quiannulatene + diphosphate. The protein operates within secondary metabolite biosynthesis; terpenoid biosynthesis. Functionally, bifunctional sesterterpene synthase; part of the gene cluster that mediates the biosynthesis of the pentacyclic sesterterpene quiannulatic acid. The first step of the pathway is performed by the sesterterpene synthase (QS) that possesses both prenyl transferase and terpene cyclase activity, converting isopentenyl diphosphate and dimethylallyl diphosphate into geranylfarnesyl diphosphate (GFPP) and further converting GFPP into quiannulatene via an unprecedented cyclization mode which involves three rounds of hydride shifts and two successive C-C bond migrations to construct the 5-6-5-5-5 fused ring. The cytochrome P450 monooxygenase Qnn-P450 then oxidizes quiannulatene at C-19 in 3 successive reactions to afford quiannulatic acid. The chain is Quiannulatene synthase from Emericella variicolor (Aspergillus stellatus).